The following is a 220-amino-acid chain: UPF0319 protein YccT (220 aa).

An N-terminal signal peptide occupies residues 1-20 (MKAGTLTLLIALCLPISVSA).

This sequence belongs to the UPF0319 family.

This is UPF0319 protein YccT from Escherichia fergusonii (strain ATCC 35469 / DSM 13698 / CCUG 18766 / IAM 14443 / JCM 21226 / LMG 7866 / NBRC 102419 / NCTC 12128 / CDC 0568-73).